A 137-amino-acid chain; its full sequence is Acidic phospholipase A2 PL-II (137 aa).

The N-terminal stretch at 1 to 17 is a signal peptide; it reads AVCVSLLGASSIRPLPL. 7 disulfide bridges follow: Cys28/Cys89, Cys44/Cys136, Cys46/Cys62, Cys61/Cys117, Cys68/Cys110, Cys78/Cys103, and Cys96/Cys108. Ca(2+) contacts are provided by Tyr45, Gly47, and Gly49. Residue His65 is part of the active site. Residue Asp66 coordinates Ca(2+). Residue Asp111 is part of the active site.

The cofactor is Ca(2+). In terms of tissue distribution, expressed by the venom gland.

The protein resides in the secreted. The catalysed reaction is a 1,2-diacyl-sn-glycero-3-phosphocholine + H2O = a 1-acyl-sn-glycero-3-phosphocholine + a fatty acid + H(+). Its function is as follows. Snake venom phospholipase A2 (PLA2) that may act in the hemostasis system of the prey. Exhibits hydrolytic activities, and prefers the anionic micelles (dPPC with deoxycholate) (54 umol/mg/min) to the zwitterionic micelles (dPPC with Triton X-100) (15 umol/mg/min). PLA2 catalyzes the calcium-dependent hydrolysis of the 2-acyl groups in 3-sn-phosphoglycerides. The chain is Acidic phospholipase A2 PL-II from Walterinnesia aegyptia (Desert black snake).